The primary structure comprises 837 residues: Telomere length regulation protein TEL2 homolog (837 aa).

The residue at position 1 (Met1) is an N-acetylmethionine. Hydroxyproline is present on residues Pro374, Pro419, and Pro422. Residues 444–472 (QPAGDGASEAGTSLVPATAEPPAETPAEI) are disordered. Residue Ser456 is modified to Phosphoserine. A compositionally biased stretch (low complexity) spans 459-471 (PATAEPPAETPAE). The residue at position 485 (Ser485) is a Phosphoserine; by CK2. A phosphoserine mark is found at Ser487 and Ser491. Residues 627 to 651 (GCLGRTPQPGSPSPNTPCLPEAAVS) form a disordered region. Ser688 and Ser836 each carry phosphoserine.

The protein belongs to the TEL2 family. Component of the TTT complex composed of TELO2, TTI1 and TTI2. Interacts with ATM, ATR, MTOR, PRKDC, RUVBL2, TTI1, TTI2, SMG1 and TRRAP. Component of the mTORC1 and mTORC2 complexes. Interacts (phosphorylated form) with PIH1D1 which mediates interaction of TELO2 with the R2TP complex composed of RUVBL1, RUVBL2, PIH1D1, and RPAP3. In terms of processing, hydroxylation by PHD3 is required for a proper interaction with ATR, and activation of the ATR/CHK1/p53 pathway following DNA damage. Post-translationally, phosphorylated at Ser-485 by CK2 following growth factor deprivation, leading to its subsequent ubiquitination by the SCF(FBXO9) complex. Phosphorylation by CK2 only takes place when TELO2 is bound to mTORC1, not mTORC2; leading to selective ubiquitination of mTORC1-associated protein. Ubiquitinated by the SCF(FBXO9) complex following phosphorylation by CK2 in response to growth factor deprivation, leading to its degradation by the proteasome. Only mTORC1-associated protein is ubiquitinated and degraded, leading to selective inactivation of mTORC1 to restrain cell growth and protein translation, while mTORC2 is activated due to the relief of feedback inhibition by mTORC1.

Its subcellular location is the cytoplasm. The protein localises to the membrane. It localises to the nucleus. The protein resides in the chromosome. It is found in the telomere. In terms of biological role, regulator of the DNA damage response (DDR). Part of the TTT complex that is required to stabilize protein levels of the phosphatidylinositol 3-kinase-related protein kinase (PIKK) family proteins. The TTT complex is involved in the cellular resistance to DNA damage stresses, like ionizing radiation (IR), ultraviolet (UV) and mitomycin C (MMC). Together with the TTT complex and HSP90 may participate in the proper folding of newly synthesized PIKKs. Promotes assembly, stabilizes and maintains the activity of mTORC1 and mTORC2 complexes, which regulate cell growth and survival in response to nutrient and hormonal signals. May be involved in telomere length regulation. In Homo sapiens (Human), this protein is Telomere length regulation protein TEL2 homolog (TELO2).